Reading from the N-terminus, the 514-residue chain is 2,3-bisphosphoglycerate-independent phosphoglycerate mutase (514 aa).

Residues Asp-14 and Ser-64 each contribute to the Mn(2+) site. The active-site Phosphoserine intermediate is the Ser-64. Residues His-125, 155 to 156 (RD), Arg-187, Arg-193, 263 to 266 (RADR), and Lys-336 contribute to the substrate site. Mn(2+) is bound by residues Asp-403, His-407, Asp-444, His-445, and His-463.

Belongs to the BPG-independent phosphoglycerate mutase family. Monomer. It depends on Mn(2+) as a cofactor.

The enzyme catalyses (2R)-2-phosphoglycerate = (2R)-3-phosphoglycerate. The protein operates within carbohydrate degradation; glycolysis; pyruvate from D-glyceraldehyde 3-phosphate: step 3/5. Its function is as follows. Catalyzes the interconversion of 2-phosphoglycerate and 3-phosphoglycerate. The sequence is that of 2,3-bisphosphoglycerate-independent phosphoglycerate mutase from Enterobacter sp. (strain 638).